We begin with the raw amino-acid sequence, 515 residues long: Hyccin (515 aa).

Residues 358 to 378 (STSQSALSNSSNTSSKNLLGK) are compositionally biased toward low complexity. Disordered stretches follow at residues 358 to 410 (STSQ…TQRA) and 491 to 515 (TDLP…LSTD). The span at 389–403 (AGREKEGETCREHLS) shows a compositional bias: basic and acidic residues. Over residues 498–515 (KQPNQQRPPSISITLSTD) the composition is skewed to polar residues.

It belongs to the Hyccin family. Component of a phosphatidylinositol 4-kinase (PI4K) complex.

The protein resides in the cytoplasm. Its subcellular location is the cytosol. It is found in the cell membrane. Functionally, component of a complex required to localize phosphatidylinositol 4-kinase (PI4K) to the plasma membrane. The complex acts as a regulator of phosphatidylinositol 4-phosphate (PtdIns(4)P) synthesis. In Gallus gallus (Chicken), this protein is Hyccin (HYCC1).